The following is a 295-amino-acid chain: MKVLWAALLVTFLAGCQAKVEQPVEPETEPELRQQAEGQSGQPWELALGRFWDYLRWVQTLSEQVQEELLSPQVTQELTTLMDETMKELKAYKSELEEQLSPVAEETRARLSKELQAAQARLGADMEDVRSRLVQYRSEVQAMLGQSTEELRARLASHLRKLRKRLLRDADDLQKRLARLGPLVEQGRVRAATVGSLASQPLQERAQAKLRARMEEMGSRTRDRLDEVKEQVAEVRAKLEEQAQQISLQAEAFQARLKSWFEPLVEDMQRQWAGLVEKVQAAVGASTAPVPSDNH.

An N-terminal signal peptide occupies residues Met-1–Ala-18. 6 consecutive repeat copies span residues Thr-80–Ser-101, Pro-102–Gly-123, Ala-124–Gly-145, Gln-146–Leu-167, Thr-193–Arg-211, and Ala-212–Ala-233. The interval Thr-80–Ala-233 is 6 X 22 AA approximate tandem repeats. Met-143 is subject to Methionine sulfoxide. Ser-147 is subject to Phosphoserine. Positions His-158–Arg-168 are LDL and other lipoprotein receptors binding. Leu-162–Arg-165 lines the heparin pocket. Residues Ala-191–Met-268 form a lipid-binding and lipoprotein association region. Residues Gln-244 to His-295 form a homooligomerization region. The tract at residues Arg-256–Met-268 is specificity for association with VLDL.

Belongs to the apolipoprotein A1/A4/E family. As to quaternary structure, homotetramer. May interact with ABCA1; functionally associated with ABCA1 in the biogenesis of HDLs. May interact with APP/A4 amyloid-beta peptide; the interaction is extremely stable in vitro but its physiological significance is unclear. May interact with MAPT. May interact with MAP2. In the cerebrospinal fluid, interacts with secreted SORL1. Interacts with PMEL; this allows the loading of PMEL luminal fragment on ILVs to induce fibril nucleation. APOE exists as multiple glycosylated and sialylated glycoforms within cells and in plasma. The extent of glycosylation and sialylation are tissue and context specific. In terms of processing, glycated in plasma VLDL. Post-translationally, phosphorylated by FAM20C in the extracellular medium.

The protein localises to the secreted. It is found in the extracellular space. The protein resides in the extracellular matrix. It localises to the extracellular vesicle. Its subcellular location is the endosome. The protein localises to the multivesicular body. In terms of biological role, APOE is an apolipoprotein, a protein associating with lipid particles, that mainly functions in lipoprotein-mediated lipid transport between organs via the plasma and interstitial fluids. APOE is a core component of plasma lipoproteins and is involved in their production, conversion and clearance. Apolipoproteins are amphipathic molecules that interact both with lipids of the lipoprotein particle core and the aqueous environment of the plasma. As such, APOE associates with chylomicrons, chylomicron remnants, very low density lipoproteins (VLDL) and intermediate density lipoproteins (IDL) but shows a preferential binding to high-density lipoproteins (HDL). It also binds a wide range of cellular receptors including the LDL receptor/LDLR, the LDL receptor-related proteins LRP1, LRP2 and LRP8 and the very low-density lipoprotein receptor/VLDLR that mediate the cellular uptake of the APOE-containing lipoprotein particles. Finally, APOE also has a heparin-binding activity and binds heparan-sulfate proteoglycans on the surface of cells, a property that supports the capture and the receptor-mediated uptake of APOE-containing lipoproteins by cells. A main function of APOE is to mediate lipoprotein clearance through the uptake of chylomicrons, VLDLs, and HDLs by hepatocytes. APOE is also involved in the biosynthesis by the liver of VLDLs as well as their uptake by peripheral tissues ensuring the delivery of triglycerides and energy storage in muscle, heart and adipose tissues. By participating in the lipoprotein-mediated distribution of lipids among tissues, APOE plays a critical role in plasma and tissues lipid homeostasis. APOE is also involved in two steps of reverse cholesterol transport, the HDLs-mediated transport of cholesterol from peripheral tissues to the liver, and thereby plays an important role in cholesterol homeostasis. First, it is functionally associated with ABCA1 in the biogenesis of HDLs in tissues. Second, it is enriched in circulating HDLs and mediates their uptake by hepatocytes. APOE also plays an important role in lipid transport in the central nervous system, regulating neuron survival and sprouting. In Macaca mulatta (Rhesus macaque), this protein is Apolipoprotein E (APOE).